The chain runs to 719 residues: Eukaryotic translation initiation factor 3 subunit B (719 aa).

One can recognise an RRM domain in the interval 60-147; sequence NILVVDNLPV…HIFAVNMFDD (88 aa). 3 WD repeats span residues 167–207, 511–553, and 555–598; these read VPGE…KPEL, LKGK…TMAS, and EHFM…LYRI. Basic and acidic residues predominate over residues 675 to 686; sequence EKMERQKLRDGE. Positions 675-698 are disordered; the sequence is EKMERQKLRDGEASDEEEEYEAKE. Acidic residues predominate over residues 687–698; it reads ASDEEEEYEAKE.

This sequence belongs to the eIF-3 subunit B family. As to quaternary structure, component of the eukaryotic translation initiation factor 3 (eIF-3) complex.

It is found in the cytoplasm. RNA-binding component of the eukaryotic translation initiation factor 3 (eIF-3) complex, which is involved in protein synthesis of a specialized repertoire of mRNAs and, together with other initiation factors, stimulates binding of mRNA and methionyl-tRNAi to the 40S ribosome. The eIF-3 complex specifically targets and initiates translation of a subset of mRNAs involved in cell proliferation. In Nicotiana tabacum (Common tobacco), this protein is Eukaryotic translation initiation factor 3 subunit B (TIF3B1).